We begin with the raw amino-acid sequence, 842 residues long: Protein translocase subunit SecA 1 (842 aa).

ATP contacts are provided by residues Q85, 103 to 107 (GEGKT), and D493. The Zn(2+) site is built by C824, C826, C835, and H836.

Belongs to the SecA family. Monomer and homodimer. Part of the essential Sec protein translocation apparatus which comprises SecA, SecYEG and auxiliary proteins SecDF. Other proteins may also be involved. The cofactor is Zn(2+).

It localises to the cell membrane. It is found in the cytoplasm. The enzyme catalyses ATP + H2O + cellular proteinSide 1 = ADP + phosphate + cellular proteinSide 2.. Functionally, part of the Sec protein translocase complex. Interacts with the SecYEG preprotein conducting channel. Has a central role in coupling the hydrolysis of ATP to the transfer of proteins into and across the cell membrane, serving as an ATP-driven molecular motor driving the stepwise translocation of polypeptide chains across the membrane. The protein is Protein translocase subunit SecA 1 of Streptococcus agalactiae serotype Ia (strain ATCC 27591 / A909 / CDC SS700).